Here is a 134-residue protein sequence, read N- to C-terminus: Large-conductance mechanosensitive channel (134 aa).

Helical transmembrane passes span F10 to G30 and G76 to I96.

The protein belongs to the MscL family. In terms of assembly, homopentamer.

It localises to the cell inner membrane. Its function is as follows. Channel that opens in response to stretch forces in the membrane lipid bilayer. May participate in the regulation of osmotic pressure changes within the cell. This chain is Large-conductance mechanosensitive channel, found in Prosthecochloris aestuarii (strain DSM 271 / SK 413).